A 428-amino-acid polypeptide reads, in one-letter code: MITGVFSMRLWTPVGVLTSLAYCLHQRRVALAELQEADGRRPVDRSLLKSKMVQVVFRHGARSPRKPLPLEEQVEWNPQLLEVPPQTQFDYTVTNLAGGPKPYSPYDAQYCETTLKGGMFAGQLTKVGMQQMFALGERLRKNYVEDIPFLSPTFSPQEVFIRSTNIFRNLESTRCLLAGLFQCQKEGPIIIHTDEADSEVLYPNYQSCWSLRQRTRGRRQTASLQPGISEDLKKVKDRMGIDSSDKVDFFILLDNMAAEQAHNLPSCPMLKRFAQMIEQRAVDTSLYILPKEDRESLQMAVGPLLHILESNLLKAMDSATAPDKIRKLYLYAAHDVTLIPLLMTLGIFDHKWPPFAVDLTMELYQHLESKEWFVQLYYHGKEQVPRGCPDGLCPLDMFLNAMSVYTLSPEKYHALCSQTQVMEVGNGE.

The N-terminal 32 residues, 1-32 (MITGVFSMRLWTPVGVLTSLAYCLHQRRVALA), are a transit peptide targeting the mitochondrion. A substrate binding region spans residues 58 to 168 (RHGARSPRKP…VFIRSTNIFR (111 aa)). The active-site Nucleophile is histidine 59. The Proton donor role is filled by aspartate 335.

The protein belongs to the histidine acid phosphatase family. As to quaternary structure, monomer.

It is found in the mitochondrion. It carries out the reaction a phosphate monoester + H2O = an alcohol + phosphate. The catalysed reaction is 1-(9Z-octadecenoyl)-sn-glycero-3-phosphate + H2O = 1-(9Z-octadecenoyl)-sn-glycerol + phosphate. In terms of biological role, hydrolyzes lysophosphatidic acid (LPA) containing a medium length fatty acid chain to the corresponding monoacylglycerol. Has highest activity with lysophosphatidic acid containing myristate (C14:0), monounsaturated oleate (C18:1) or palmitate (C16:0), and lower activity with C18:0 and C6:0 lysophosphatidic acid. This Pongo abelii (Sumatran orangutan) protein is Lysophosphatidic acid phosphatase type 6 (ACP6).